A 520-amino-acid polypeptide reads, in one-letter code: Cyclic AMP-responsive element-binding protein 3-like protein 2 (520 aa).

Over 1–378 (MEVLESGEQG…CKLAGTQTGT (378 aa)) the chain is Cytoplasmic. Ser-93 is subject to Phosphoserine. Residue Lys-178 forms a Glycyl lysine isopeptide (Lys-Gly) (interchain with G-Cter in SUMO2) linkage. At Ser-191 the chain carries Phosphoserine. The disordered stretch occupies residues 195 to 264 (APVDHLHLPP…PHKLQGSGPL (70 aa)). Low complexity-rich tracts occupy residues 208 to 220 (SSHG…SLSP) and 234 to 255 (SPSR…LTAP). The 64-residue stretch at 294–357 (ALKKIRRKIK…RTLLQQLQKL (64 aa)) folds into the bZIP domain. The basic motif stretch occupies residues 296-325 (KKIRRKIKNKISAQESRRKKKEYMDSLEKK). The segment at 336–357 (LRKKVEVLENTNRTLLQQLQKL) is leucine-zipper. Residues 379–399 (CLMVVVLCFAVAFGSFFQGYG) traverse the membrane as a helical; Signal-anchor for type II membrane protein segment. Residues 400–520 (PYPSATKMAL…ELDRRVNTTF (121 aa)) lie on the Lumenal side of the membrane. An S1P recognition motif is present at residues 427 to 430 (RNLL). N-linked (GlcNAc...) asparagine glycosylation is found at Asn-480, Asn-504, and Asn-517.

It belongs to the bZIP family. ATF subfamily. As to quaternary structure, binds DNA as a dimer. Upon ER stress, translocated to the Golgi apparatus, where it is processed by regulated intramembrane proteolysis (RIP) to release the cytosol-facing N-terminal transcription factor domain. The cleavage is performed sequentially by site-1 and site-2 proteases (S1P/MBTPS1 and S2P/MBTPS2). Post-translationally, N-glycosylated. In terms of processing, ubiquitinated by HRD1/SYVN1; undergoes 'Lys-48'-linked ubiquitination, followed by rapid proteasomal degradation under normal conditions. Upon ER stress, SYVN1 E3 ubiquitin-protein ligase dissociates from its substrate, ubiquitination does not occur and CREB3L2 is stabilized.

The protein localises to the endoplasmic reticulum membrane. It is found in the nucleus. In terms of biological role, transcription factor involved in unfolded protein response (UPR). In the absence of endoplasmic reticulum (ER) stress, inserted into ER membranes, with N-terminal DNA-binding and transcription activation domains oriented toward the cytosolic face of the membrane. In response to ER stress, transported to the Golgi, where it is cleaved in a site-specific manner by resident proteases S1P/MBTPS1 and S2P/MBTPS2. The released N-terminal cytosolic domain is translocated to the nucleus to effect transcription of specific target genes. Plays a critical role in chondrogenesis by activating the transcription of SEC23A, which promotes the transport and secretion of cartilage matrix proteins, and possibly that of ER biogenesis-related genes. In a neuroblastoma cell line, protects cells from ER stress-induced death. In vitro activates transcription of target genes via direct binding to the CRE site. The protein is Cyclic AMP-responsive element-binding protein 3-like protein 2 (CREB3L2) of Pongo abelii (Sumatran orangutan).